A 424-amino-acid polypeptide reads, in one-letter code: Insertion element IS2A uncharacterized 48.2 kDa protein (424 aa).

The 184-residue stretch at 229–412 (KPAVPPSKRA…SPREYLRHGA (184 aa)) folds into the Integrase catalytic domain.

Belongs to the transposase 8 family.

This chain is Insertion element IS2A uncharacterized 48.2 kDa protein, found in Escherichia coli.